A 339-amino-acid polypeptide reads, in one-letter code: D-alanine--D-alanine ligase (339 aa).

One can recognise an ATP-grasp domain in the interval lysine 126–glutamate 333. Residue alanine 158–glutamate 213 participates in ATP binding. Positions 286, 300, and 302 each coordinate Mg(2+).

Belongs to the D-alanine--D-alanine ligase family. Requires Mg(2+) as cofactor. The cofactor is Mn(2+).

The protein resides in the cytoplasm. It catalyses the reaction 2 D-alanine + ATP = D-alanyl-D-alanine + ADP + phosphate + H(+). Its pathway is cell wall biogenesis; peptidoglycan biosynthesis. Functionally, cell wall formation. This chain is D-alanine--D-alanine ligase, found in Deinococcus radiodurans (strain ATCC 13939 / DSM 20539 / JCM 16871 / CCUG 27074 / LMG 4051 / NBRC 15346 / NCIMB 9279 / VKM B-1422 / R1).